We begin with the raw amino-acid sequence, 263 residues long: MQGRTPLLETLRELECEIRLLTVYARECCGCYEILRRKLDRLSGLIGEDCSRAQWQADSDDPALQALGLRLRDAAVQALCELEKHLCQGVLHEPGEMGRYLGSLLESIRGELDSAGIDADARVLFVGSGALPTSALVLAREVGAHLCCLDIDEEALGCAREIARCQGLEARMQFSSLPPAELAFSRDATHFLIASLVQQKSAVLAQIRQVMRADAKVLLRHGSGIKGLFNYPVEPAELDGWRVCAERVSQPLYDTLILEKAGR.

The protein belongs to the methyltransferase superfamily. CntL family.

It catalyses the reaction L-histidine + S-adenosyl-L-methionine = (2S)-2-amino-4-{[(1S)-1-carboxy-2-(1H-imidazol-4-yl)ethyl]amino}butanoate + S-methyl-5'-thioadenosine + H(+). Functionally, catalyzes the nucleophilic attack of one alpha-aminobutanoate moiety from SAM onto L-histidine to produce the intermediate (2S)-2-amino-4-{[(1S)-1-carboxy-2-(1H-imidazol-4-yl)ethyl]amino}butanoate. Functions in the biosynthesis of the metallophore pseudopaline, which is involved in the acquisition of nickel and zinc, and thus enables bacterial growth inside the host, where metal access is limited. Therefore, this enzyme probably contributes to Pseudomonas virulence. Appears to be specific for L-histidine as substrate. The sequence is that of L-histidine 2-aminobutanoyltransferase from Pseudomonas aeruginosa (strain ATCC 15692 / DSM 22644 / CIP 104116 / JCM 14847 / LMG 12228 / 1C / PRS 101 / PAO1).